A 355-amino-acid polypeptide reads, in one-letter code: Syntaxin-5 (355 aa).

Residues 1–333 (MIPRKRYGSK…KYFQSVTSNR (333 aa)) are Cytoplasmic-facing. Residues 28-37 (PATAGSSSSD) show a composition bias toward polar residues. The segment at 28 to 47 (PATAGSSSSDIAPLPPPVAL) is disordered. An IxM motif; signal for cargo packaging into COPII-coated vesicles motif is present at residues 245–247 (IDM). Residues 263 to 325 (DSYIQSRADT…EAAHSEILKY (63 aa)) enclose the t-SNARE coiled-coil homology domain. Positions 287 to 318 (FQQLAHMVKEQEETIQRIDENVLGAQLDVEAA) form a coiled coil. Residues 334-354 (WLMVKIFLILIVFFIIFVVFL) traverse the membrane as a helical; Anchor for type IV membrane protein segment. A355 is a topological domain (vesicular).

The protein belongs to the syntaxin family. In terms of assembly, part of a ternary complex containing STX5A, NSFL1C and VCP. Part of a unique SNARE complex composed of the Golgi SNAREs GOSR1, GOSR2 and YKT6. This complex also includes VTI1A. Component of a SNARE complex consisting of STX5, YKT6, GOSR1 and BET1L. Interacts with BET1L. Interacts with BET1. Interacts with COG4. Interacts with GM130/GOLGA2. Interacts (via IxM motif) with SEC24C and SEC24D; mediates STX5 packaging into COPII-coated vesicles. Interacts with VLDLR; this interaction mediates VLDLR translocation from the endoplasmic reticulum to the plasma membrane.

The protein resides in the endoplasmic reticulum-Golgi intermediate compartment membrane. Its subcellular location is the golgi apparatus membrane. Its function is as follows. Mediates endoplasmic reticulum to Golgi transport. Together with p115/USO1 and GM130/GOLGA2, involved in vesicle tethering and fusion at the cis-Golgi membrane to maintain the stacked and inter-connected structure of the Golgi apparatus. This Bos taurus (Bovine) protein is Syntaxin-5 (STX5).